We begin with the raw amino-acid sequence, 370 residues long: Queuine tRNA-ribosyltransferase (370 aa).

D89 serves as the catalytic Proton acceptor. Substrate is bound by residues 89–93 (DSGGF), D143, and G214. Positions 245–251 (GVGKPED) are RNA binding. Catalysis depends on D264, which acts as the Nucleophile. The segment at 269–273 (TRNAR) is RNA binding; important for wobble base 34 recognition. Positions 302, 304, 307, and 333 each coordinate Zn(2+).

Belongs to the queuine tRNA-ribosyltransferase family. As to quaternary structure, homodimer. Within each dimer, one monomer is responsible for RNA recognition and catalysis, while the other monomer binds to the replacement base PreQ1. Zn(2+) serves as cofactor.

It carries out the reaction 7-aminomethyl-7-carbaguanine + guanosine(34) in tRNA = 7-aminomethyl-7-carbaguanosine(34) in tRNA + guanine. The protein operates within tRNA modification; tRNA-queuosine biosynthesis. Functionally, catalyzes the base-exchange of a guanine (G) residue with the queuine precursor 7-aminomethyl-7-deazaguanine (PreQ1) at position 34 (anticodon wobble position) in tRNAs with GU(N) anticodons (tRNA-Asp, -Asn, -His and -Tyr). Catalysis occurs through a double-displacement mechanism. The nucleophile active site attacks the C1' of nucleotide 34 to detach the guanine base from the RNA, forming a covalent enzyme-RNA intermediate. The proton acceptor active site deprotonates the incoming PreQ1, allowing a nucleophilic attack on the C1' of the ribose to form the product. After dissociation, two additional enzymatic reactions on the tRNA convert PreQ1 to queuine (Q), resulting in the hypermodified nucleoside queuosine (7-(((4,5-cis-dihydroxy-2-cyclopenten-1-yl)amino)methyl)-7-deazaguanosine). This chain is Queuine tRNA-ribosyltransferase, found in Buchnera aphidicola subsp. Acyrthosiphon pisum (strain APS) (Acyrthosiphon pisum symbiotic bacterium).